The sequence spans 184 residues: Elongation factor P (184 aa).

This sequence belongs to the elongation factor P family.

It localises to the cytoplasm. The protein operates within protein biosynthesis; polypeptide chain elongation. In terms of biological role, involved in peptide bond synthesis. Stimulates efficient translation and peptide-bond synthesis on native or reconstituted 70S ribosomes in vitro. Probably functions indirectly by altering the affinity of the ribosome for aminoacyl-tRNA, thus increasing their reactivity as acceptors for peptidyl transferase. In Verminephrobacter eiseniae (strain EF01-2), this protein is Elongation factor P.